The following is a 131-amino-acid chain: C-type natriuretic peptide 1 (131 aa).

A signal peptide spans 1 to 22; that stretch reads MLYPALLCAALLLIAPLGHTEG. Residues 23–109 constitute a propeptide that is removed on maturation; it reads RTLHPSPDAI…KRAVMDRSRR (87 aa). C115 and C131 are joined by a disulfide.

Belongs to the natriuretic peptide family. In terms of tissue distribution, expressed in brain and to a low extent in atrium.

It localises to the secreted. Its function is as follows. Exhibits natriuretic and vasodepressant activity. Has a cGMP-stimulating activity. This Oncorhynchus mykiss (Rainbow trout) protein is C-type natriuretic peptide 1.